The following is a 233-amino-acid chain: MAAKIFCFLMLLGLSASVATATIFPQCSQAPIASLLPPYLSPAVSSMCENPIVQPYRIQQAIATGILPLSPLFLQQPSALLQQLPLVHLVAQNIRAQQLQQLVLANLAAYSQQHQFLPFNQLAALNSAAYLQQQLPFSQLVAAYPRQFLPFNQLAALNSAAYLQQQQLLPFSQLADVSPAAFLTQQQLLPFYLHAMPNAGTLLQLQQLLPFNQLALTNSTVFYQQPIIGGALF.

An N-terminal signal peptide occupies residues 1 to 21 (MAAKIFCFLMLLGLSASVATA).

The protein belongs to the zein family.

Functionally, zeins are major seed storage proteins. This chain is Zein-alpha PMS2 (ZMPMS2), found in Zea mays (Maize).